Here is a 250-residue protein sequence, read N- to C-terminus: Adenosylcobinamide-GDP ribazoletransferase (250 aa).

The next 6 membrane-spanning stretches (helical) occupy residues 33-53, 63-83, 109-129, 137-157, 180-200, and 203-223; these read IASYFPIVGIVIGGILSLLYI, IVMTFIVAFSYVLTGAMHIDG, LGTNGVLAAIFIVVLKILFLT, LTALLITPIIGRLSIVFSMMI, FAIAFVISIATSYFILPLAVF, and ILTISLFVTYIVSKYISLRIG.

It belongs to the CobS family. Requires Mg(2+) as cofactor.

Its subcellular location is the cell membrane. The catalysed reaction is alpha-ribazole + adenosylcob(III)inamide-GDP = adenosylcob(III)alamin + GMP + H(+). The enzyme catalyses alpha-ribazole 5'-phosphate + adenosylcob(III)inamide-GDP = adenosylcob(III)alamin 5'-phosphate + GMP + H(+). It participates in cofactor biosynthesis; adenosylcobalamin biosynthesis; adenosylcobalamin from cob(II)yrinate a,c-diamide: step 7/7. In terms of biological role, joins adenosylcobinamide-GDP and alpha-ribazole to generate adenosylcobalamin (Ado-cobalamin). Also synthesizes adenosylcobalamin 5'-phosphate from adenosylcobinamide-GDP and alpha-ribazole 5'-phosphate. In Thermoanaerobacter pseudethanolicus (strain ATCC 33223 / 39E) (Clostridium thermohydrosulfuricum), this protein is Adenosylcobinamide-GDP ribazoletransferase.